Reading from the N-terminus, the 64-residue chain is Large ribosomal subunit protein bL32 (64 aa).

The segment at 1-35 (MAVQKSRVTPSRRGQRRSHDALTAKQLSTDPTSGE) is disordered.

The protein belongs to the bacterial ribosomal protein bL32 family.

This Xanthomonas campestris pv. campestris (strain 8004) protein is Large ribosomal subunit protein bL32.